A 1951-amino-acid chain; its full sequence is Sodium channel protein type 3 subunit alpha (1951 aa).

At 1–128 (MAQALLVPPG…KIAIKILVHS (128 aa)) the chain is on the cytoplasmic side. The tract at residues 28 to 60 (RAAEEKAKKPKKEQDIDDENKPKPNSDLEAGKN) is disordered. Positions 46-57 (ENKPKPNSDLEA) are enriched in basic and acidic residues. The stretch at 110-455 (ILTPLNPVRK…QQMLEQLKKQ (346 aa)) is one I repeat. Residues 129–146 (LFSMLIMCTILTNCVFMT) form a helical membrane-spanning segment. The Extracellular portion of the chain corresponds to 147–152 (LSNPPD). The chain crosses the membrane as a helical span at residues 153-174 (WTKNVEYTFTGIYTFESLIKIL). Topologically, residues 175-188 (ARGFCLEDFTFLRD) are cytoplasmic. The helical transmembrane segment at 189-206 (PWNWLDFSVIVMAYVTEF) threads the bilayer. The Extracellular portion of the chain corresponds to 207–213 (VDLGNVS). N-linked (GlcNAc...) asparagine glycosylation is present at Asn-211. A helical transmembrane segment spans residues 214 to 235 (ALRTFRVLRALKTISVIPGLKT). Over 236–249 (IVGALIQSVKKLSD) the chain is Cytoplasmic. Residues 250–269 (VMILTVFCLSVFALIGLQLF) form a helical membrane-spanning segment. Over 270–369 (MGNLRNKCSQ…NYGYTSFDTF (100 aa)) the chain is Extracellular. N-linked (GlcNAc...) asparagine glycans are attached at residues Asn-290, Asn-296, Asn-302, Asn-307, and Asn-339. Positions 370–386 (SWAFLSLFRLMTQDYWE) form an intramembrane region, pore-forming. Residues 387-397 (NLYQLTLRAAG) lie on the Extracellular side of the membrane. The chain crosses the membrane as a helical span at residues 398 to 424 (KTYMIFFVLVIFLGSFYLVNLILAVVA). Over 425 to 712 (MAYEEQNQAT…LVNLIVMDPF (288 aa)) the chain is Cytoplasmic. Ser-484, Ser-485, and Ser-486 each carry phosphoserine. Disordered stretches follow at residues 493-529 (SKSA…SESE) and 587-633 (VGSE…TEVR). Residues 500–509 (RNRRKKRRQR) are compositionally biased toward basic residues. 2 stretches are compositionally biased toward basic and acidic residues: residues 510–529 (EHLE…SESE) and 596–622 (DEHS…ERRN). An II repeat occupies 693 to 965 (CCDAWLKVKH…QIAVGRMQKG (273 aa)). Residues 713 to 730 (VDLAITICIVLNTLFMAM) form a helical membrane-spanning segment. Over 731–738 (EHYPMTQQ) the chain is Extracellular. The chain crosses the membrane as a helical span at residues 739–763 (FSSVLTVGNLVFTGIFTAEMVLKII). The Cytoplasmic portion of the chain corresponds to 764 to 773 (AMDPYYYFQE). The chain crosses the membrane as a helical span at residues 774–793 (GWNIFDGIIVSLSLMELGLA). Over 794 to 797 (NVEG) the chain is Extracellular. The chain crosses the membrane as a helical span at residues 798–816 (LSVLRSFRLLRVFKLAKSW). At 817–834 (PTLNMLIKIIGNSVGALG) the chain is on the cytoplasmic side. Residues 835–855 (NLTLVLAIIVFIFAVVGMQLF) form a helical membrane-spanning segment. Residues 856–880 (GKSYKECVCKINVDCKLPRWHMNDF) are Extracellular-facing. Cys-864 and Cys-870 are disulfide-bonded. The pore-forming intramembrane region spans 881–896 (FHSFLIVFRVLCGEWI). Residues 897–907 (ETMWDCMEVAG) are Extracellular-facing. A disulfide bond links Cys-902 and Cys-911. The helical transmembrane segment at 908–934 (QTMCLIVFMLVMVIGNLVVLNLFLALL) threads the bilayer. The Cytoplasmic segment spans residues 935 to 1156 (LSSFSSDNLA…RKTCYSIVEH (222 aa)). A disordered region spans residues 1068–1112 (TEEFSSESELEESKEKLNATSSSEGSTVDVAPPREGEQAEIEPEE). An III repeat occupies 1139 to 1450 (KGKIWWNLRK…KKYYNAMKKL (312 aa)). Residues 1157–1177 (NWFETFIVFMILLSSGALAFE) traverse the membrane as a helical segment. The Extracellular segment spans residues 1178 to 1189 (DIYIEQRKTIKT). Residues 1190 to 1211 (MLEYADKVFTYIFILEMLLKWV) traverse the membrane as a helical segment. At 1212 to 1217 (AYGFQT) the chain is on the cytoplasmic side. A helical membrane pass occupies residues 1218–1243 (YFTNAWCWLDFLIVDVSLVSLVANAL). The Extracellular portion of the chain corresponds to 1244 to 1252 (GYSELGAIK). Residues 1253 to 1271 (SLRTLRALRPLRALSRFEG) form a helical membrane-spanning segment. The Cytoplasmic portion of the chain corresponds to 1272 to 1284 (MRVVVNALVGAIP). The chain crosses the membrane as a helical span at residues 1285–1307 (SIMNVLLVCLIFWLIFSIMGVNL). The Extracellular segment spans residues 1308-1353 (FAGKFYHCVNTTTGNMFEIKEVNNFSDCQALGKQARWKNVKVNFDN). A disulfide bridge connects residues Cys-1315 and Cys-1335. N-linked (GlcNAc...) asparagine glycans are attached at residues Asn-1317 and Asn-1331. Residues 1354–1370 (VGAGYLALLQVATFKGW) constitute an intramembrane region (pore-forming). Residues 1371–1393 (MDIMYAAVDSRDVKLQPIYEENL) lie on the Extracellular side of the membrane. Residues 1394 to 1419 (YMYLYFVIFIIFGSFFTLNLFIGVII) form a helical membrane-spanning segment. Residues 1420–1477 (DNFNQQKKKFGGQDIFMTEEQKKYYNAMKKLGSKKPQKPIPRPANKFQGMVFDFVTRQ) are Cytoplasmic-facing. Residue Ser-1452 is modified to Phosphoserine; by PKC. The IV repeat unit spans residues 1459–1757 (IPRPANKFQG…WEKFDPDATQ (299 aa)). A helical transmembrane segment spans residues 1478-1496 (VFDISIMILICLNMVTMMV). Residues 1497–1504 (ETDDQSKY) are Extracellular-facing. A helical transmembrane segment spans residues 1505-1528 (MTLVLSRINLVFIVLFTGEFLLKL). The Cytoplasmic portion of the chain corresponds to 1529–1538 (ISLRYYYFTI). Residues 1539-1556 (GWNIFDFVVVILSIVGMF) traverse the membrane as a helical segment. The Extracellular portion of the chain corresponds to 1557–1568 (LAELIEKYFVSP). Residues 1569–1591 (TLFRVIRLARIGRILRLIKGAKG) traverse the membrane as a helical segment. Residues 1592 to 1604 (IRTLLFALMMSLP) lie on the Cytoplasmic side of the membrane. A helical membrane pass occupies residues 1605–1628 (ALFNIGLLLFLVMFIYAIFGMSNF). Over 1629 to 1650 (AYVKKEAGIDDMFNFETFGNSM) the chain is Extracellular. The pore-forming intramembrane region spans 1651-1663 (ICLFQITTSAGWD). Over 1664–1695 (GLLAPILNSAPPDCDPDAIHPGSSVKGDCGNP) the chain is Extracellular. Residues 1696-1721 (SVGIFFFVSYIIISFLVVVNMYIAVI) form a helical membrane-spanning segment. The Cytoplasmic segment spans residues 1722 to 1951 (LENFSVATEE…KGKEVRENQK (230 aa)). The IQ domain occupies 1851–1880 (EEVSAAIIQRNYRCYLLKQRLKNISSKYDK). The disordered stretch occupies residues 1898–1951 (DKLNGNSTPEKTDGSSSTTSPPSYDSVTKPDKEKFEKDKPEKEIKGKEVRENQK). Residues 1925–1951 (TKPDKEKFEKDKPEKEIKGKEVRENQK) are compositionally biased toward basic and acidic residues.

It belongs to the sodium channel (TC 1.A.1.10) family. Nav1.3/SCN3A subfamily. In terms of assembly, heterooligomer of an alpha subunit, SCN3A, and 1 to 3 regulatory beta subunits including SCN1B and SCN2B; disulfide-linked with some beta subunits like SCN2B. Interacts with NEDD4L; could regulate expression of SCN3A at the plasma membrane through ubiquitination-regulated endocytosis. Interacts with the conotoxin GVIIJ. Interacts with the spider beta/delta-theraphotoxin-Pre1a. Interacts with the spider RTX-VII toxin (AC P0DL75). Post-translationally, may be ubiquitinated by NEDD4L; which would promote its endocytosis. Phosphorylation at Ser-1452 by PKC in a highly conserved cytoplasmic loop slows inactivation of the sodium channel and reduces peak sodium currents.

It localises to the cell membrane. Its subcellular location is the basal cell membrane. It catalyses the reaction Na(+)(in) = Na(+)(out). Functionally, pore-forming subunit of Nav1.3, a voltage-gated sodium (Nav) channel that directly mediates the depolarizing phase of action potentials in excitable membranes. Navs, also called VGSCs (voltage-gated sodium channels) or VDSCs (voltage-dependent sodium channels), operate by switching between closed and open conformations depending on the voltage difference across the membrane. In the open conformation they allow Na(+) ions to selectively pass through the pore, along their electrochemical gradient. The influx of Na+ ions provokes membrane depolarization, initiating the propagation of electrical signals throughout cells and tissues. In some secretory cell types, it also participates in cell excitability through membrane depolarization and regulates cells responsiveness to stimuli triggering secretion. For instance, it controls the release of serotonin/5-hydroxytryptamine by enterochromaffin cells and is required for both glucagon- and glucose-induced insulin secretion in pancreatic endocrine cells. In Rattus norvegicus (Rat), this protein is Sodium channel protein type 3 subunit alpha.